The following is a 342-amino-acid chain: S-adenosylmethionine:tRNA ribosyltransferase-isomerase (342 aa).

Belongs to the QueA family. As to quaternary structure, monomer.

It localises to the cytoplasm. It carries out the reaction 7-aminomethyl-7-carbaguanosine(34) in tRNA + S-adenosyl-L-methionine = epoxyqueuosine(34) in tRNA + adenine + L-methionine + 2 H(+). Its pathway is tRNA modification; tRNA-queuosine biosynthesis. Transfers and isomerizes the ribose moiety from AdoMet to the 7-aminomethyl group of 7-deazaguanine (preQ1-tRNA) to give epoxyqueuosine (oQ-tRNA). This chain is S-adenosylmethionine:tRNA ribosyltransferase-isomerase, found in Bacillus licheniformis (strain ATCC 14580 / DSM 13 / JCM 2505 / CCUG 7422 / NBRC 12200 / NCIMB 9375 / NCTC 10341 / NRRL NRS-1264 / Gibson 46).